Here is a 155-residue protein sequence, read N- to C-terminus: Ribosome-binding factor A (155 aa).

Composition is skewed to basic and acidic residues over residues 116-125 (ARQRDQEVAR) and 142-155 (SPHE…ADGW). Positions 116 to 155 (ARQRDQEVARQAEGATPAGDANPYKTSPHEGRPESEADGW) are disordered.

It belongs to the RbfA family. As to quaternary structure, monomer. Binds 30S ribosomal subunits, but not 50S ribosomal subunits or 70S ribosomes.

The protein localises to the cytoplasm. Its function is as follows. One of several proteins that assist in the late maturation steps of the functional core of the 30S ribosomal subunit. Associates with free 30S ribosomal subunits (but not with 30S subunits that are part of 70S ribosomes or polysomes). Required for efficient processing of 16S rRNA. May interact with the 5'-terminal helix region of 16S rRNA. The sequence is that of Ribosome-binding factor A from Corynebacterium kroppenstedtii (strain DSM 44385 / JCM 11950 / CIP 105744 / CCUG 35717).